Consider the following 391-residue polypeptide: Pectate lyase D (391 aa).

The signal sequence occupies residues 1-31 (MNNTRVSFRSTKSLLAAIIATSMMTWSVNRA). The Ca(2+) site is built by Asp-170 and Asp-213. Residue Arg-266 is part of the active site.

It belongs to the polysaccharide lyase 1 family. PLBC subfamily. Ca(2+) is required as a cofactor.

It is found in the secreted. It carries out the reaction Eliminative cleavage of (1-&gt;4)-alpha-D-galacturonan to give oligosaccharides with 4-deoxy-alpha-D-galact-4-enuronosyl groups at their non-reducing ends.. It participates in glycan metabolism; pectin degradation; 2-dehydro-3-deoxy-D-gluconate from pectin: step 2/5. Functionally, involved in maceration and soft-rotting of plant tissue. In Dickeya chrysanthemi (Pectobacterium chrysanthemi), this protein is Pectate lyase D (pelD).